Consider the following 303-residue polypeptide: Monoglyceride lipase (303 aa).

T10 carries the post-translational modification Phosphothreonine. Position 58 is a 3'-nitrotyrosine (Y58). The Nucleophile role is filled by S122. Residues D239 and H269 each act as charge relay system in the active site.

Belongs to the AB hydrolase superfamily. Monoacylglycerol lipase family. Homodimer. As to expression, detected in adipose tissue, lung, liver, kidney, brain and heart.

It is found in the cytoplasm. It localises to the cytosol. Its subcellular location is the membrane. It carries out the reaction Hydrolyzes glycerol monoesters of long-chain fatty acids.. The catalysed reaction is a 1-acylglycerol + H2O = glycerol + a fatty acid + H(+). The enzyme catalyses a 2-acylglycerol + H2O = glycerol + a fatty acid + H(+). It catalyses the reaction 1-octanoylglycerol + H2O = octanoate + glycerol + H(+). It carries out the reaction 2-(5Z,8Z,11Z,14Z-eicosatetraenoyl)-glycerol + H2O = glycerol + (5Z,8Z,11Z,14Z)-eicosatetraenoate + H(+). The catalysed reaction is 1-decanoylglycerol + H2O = decanoate + glycerol + H(+). The enzyme catalyses 1-dodecanoylglycerol + H2O = dodecanoate + glycerol + H(+). It catalyses the reaction 1-tetradecanoylglycerol + H2O = tetradecanoate + glycerol + H(+). It carries out the reaction 2-hexadecanoylglycerol + H2O = glycerol + hexadecanoate + H(+). The catalysed reaction is 1-(9Z-octadecenoyl)-glycerol + H2O = glycerol + (9Z)-octadecenoate + H(+). The enzyme catalyses 2-(9Z-octadecenoyl)-glycerol + H2O = glycerol + (9Z)-octadecenoate + H(+). It catalyses the reaction 2-(9Z,12Z-octadecadienoyl)-glycerol + H2O = (9Z,12Z)-octadecadienoate + glycerol + H(+). It carries out the reaction 1-(5Z,8Z,11Z,14Z-eicosatetraenoyl)-glycerol + H2O = glycerol + (5Z,8Z,11Z,14Z)-eicosatetraenoate + H(+). The catalysed reaction is 1-(9Z,12Z-octadecadienoyl)-glycerol + H2O = (9Z,12Z)-octadecadienoate + glycerol + H(+). The enzyme catalyses 1-hexadecanoylglycerol + H2O = glycerol + hexadecanoate + H(+). It catalyses the reaction 1-octadecanoylglycerol + H2O = octadecanoate + glycerol + H(+). It carries out the reaction prostaglandin E2 1-glyceryl ester + H2O = prostaglandin E2 + glycerol + H(+). The catalysed reaction is prostaglandin D2-1-glycerol ester + H2O = prostaglandin D2 + glycerol + H(+). The enzyme catalyses 2-glyceryl-15-deoxy-Delta(12,14)-prostaglandin J2 + H2O = 15-deoxy-Delta(12,14)-prostaglandin J2 + glycerol + H(+). It catalyses the reaction prostaglandin F2alpha 1-glyceryl ester + H2O = prostaglandin F2alpha + glycerol + H(+). It participates in glycerolipid metabolism; triacylglycerol degradation. In terms of biological role, converts monoacylglycerides to free fatty acids and glycerol. Hydrolyzes the endocannabinoid 2-arachidonoylglycerol, and thereby contributes to the regulation of endocannabinoid signaling, nociperception and perception of pain. Regulates the levels of fatty acids that serve as signaling molecules and promote cancer cell migration, invasion and tumor growth. The polypeptide is Monoglyceride lipase (Homo sapiens (Human)).